A 121-amino-acid chain; its full sequence is Large ribosomal subunit protein bL12 (121 aa).

The protein belongs to the bacterial ribosomal protein bL12 family. In terms of assembly, homodimer. Part of the ribosomal stalk of the 50S ribosomal subunit. Forms a multimeric L10(L12)X complex, where L10 forms an elongated spine to which 2 to 4 L12 dimers bind in a sequential fashion. Binds GTP-bound translation factors.

Functionally, forms part of the ribosomal stalk which helps the ribosome interact with GTP-bound translation factors. Is thus essential for accurate translation. The polypeptide is Large ribosomal subunit protein bL12 (Alkaliphilus oremlandii (strain OhILAs) (Clostridium oremlandii (strain OhILAs))).